A 519-amino-acid polypeptide reads, in one-letter code: Cytosol aminopeptidase (519 aa).

Serine 42 carries the post-translational modification Phosphoserine. An N6-succinyllysine modification is found at lysine 45. A Phosphoserine modification is found at serine 54. N6-succinyllysine occurs at positions 61 and 103. Phosphoserine occurs at positions 180 and 194. Zn(2+)-binding residues include leucine 202, methionine 203, and threonine 205. Lysine 221 carries the post-translational modification N6-acetyllysine; alternate. Position 221 is an N6-succinyllysine; alternate (lysine 221). Residue serine 238 is modified to Phosphoserine. Lysine 282 and aspartate 287 together coordinate Zn(2+). Residues lysine 282, aspartate 287, serine 292, and lysine 294 each coordinate substrate. Residue aspartate 287 coordinates Mg(2+). Lysine 294 is a catalytic residue. Residues arginine 303, aspartate 305, aspartate 364, and glutamate 366 each coordinate Zn(2+). Positions 305 and 364 each coordinate substrate. Mg(2+)-binding residues include aspartate 364 and glutamate 366. Arginine 368 is a catalytic residue. Lysine 455 is modified (N6-acetyllysine; alternate). Lysine 455 is modified (N6-succinyllysine; alternate). Lysine 476 is subject to N6-succinyllysine. Residue lysine 489 is modified to N6-acetyllysine; alternate. N6-succinyllysine; alternate is present on lysine 489.

Belongs to the peptidase M17 family. Homohexamer. Zn(2+) is required as a cofactor. Requires Mn(2+) as cofactor.

It localises to the cytoplasm. It catalyses the reaction Release of an N-terminal amino acid, Xaa-|-Yaa-, in which Xaa is preferably Leu, but may be other amino acids including Pro although not Arg or Lys, and Yaa may be Pro. Amino acid amides and methyl esters are also readily hydrolyzed, but rates on arylamides are exceedingly low.. It carries out the reaction an S-substituted L-cysteinylglycine + H2O = an S-substituted L-cysteine + glycine. The enzyme catalyses L-cysteinylglycine + H2O = L-cysteine + glycine. The catalysed reaction is S-benzyl-L-cysteinylglycine + H2O = S-benzyl-L-cysteine + glycine. It catalyses the reaction Release of N-terminal proline from a peptide.. Its function is as follows. Cytosolic metallopeptidase that catalyzes the removal of unsubstituted N-terminal hydrophobic amino acids from various peptides. The presence of Zn(2+) ions is essential for the peptidase activity, and the association with other cofactors can modulate the substrate spectificity of the enzyme. For instance, in the presence of Mn(2+), it displays a specific Cys-Gly hydrolyzing activity of Cys-Gly-S-conjugates. Involved in the metabolism of glutathione and in the degradation of glutathione S-conjugates, which may play a role in the control of the cell redox status. The sequence is that of Cytosol aminopeptidase from Homo sapiens (Human).